The sequence spans 212 residues: Cytidylate kinase (212 aa).

7-15 (GPAASGKGT) contributes to the ATP binding site.

Belongs to the cytidylate kinase family. Type 1 subfamily.

The protein localises to the cytoplasm. The catalysed reaction is CMP + ATP = CDP + ADP. The enzyme catalyses dCMP + ATP = dCDP + ADP. This Rhodopseudomonas palustris (strain TIE-1) protein is Cytidylate kinase.